Reading from the N-terminus, the 79-residue chain is MSNIEERVKKIVVEQLGVKEEEVTNSASFVEDLGADSLDTVELVMALEEEFETEIPDEEAEKITTVQQAIDYINAHAQG.

The Carrier domain occupies 2-77 (SNIEERVKKI…QAIDYINAHA (76 aa)). An O-(pantetheine 4'-phosphoryl)serine modification is found at S37.

Belongs to the acyl carrier protein (ACP) family. Post-translationally, 4'-phosphopantetheine is transferred from CoA to a specific serine of apo-ACP by AcpS. This modification is essential for activity because fatty acids are bound in thioester linkage to the sulfhydryl of the prosthetic group.

Its subcellular location is the cytoplasm. The protein operates within lipid metabolism; fatty acid biosynthesis. Its function is as follows. Carrier of the growing fatty acid chain in fatty acid biosynthesis. In Thioalkalivibrio sulfidiphilus (strain HL-EbGR7), this protein is Acyl carrier protein.